A 117-amino-acid chain; its full sequence is Immunoglobulin kappa variable 1-33 (117 aa).

A signal peptide spans 1-22 (MDMRVPAQLLGLLLLWLSGARC). Residues 23–45 (DIQMTQSPSSLSASVGDRVTITC) are framework-1. Positions 24–117 (IQMTQSPSSL…YYCQQYDNLP (94 aa)) constitute an Ig-like domain. Cys45 and Cys110 are disulfide-bonded. The interval 46 to 56 (QASQDISNYLN) is complementarity-determining-1. The segment at 57–71 (WYQQKPGKAPKLLIY) is framework-2. The segment at 72 to 78 (DASNLET) is complementarity-determining-2. The framework-3 stretch occupies residues 79–110 (GVPSRFSGSGSGTDFTFTISSLQPEDIATYYC). Positions 111–117 (QQYDNLP) are complementarity-determining-3.

Immunoglobulins are composed of two identical heavy chains and two identical light chains; disulfide-linked.

Its subcellular location is the secreted. The protein resides in the cell membrane. In terms of biological role, v region of the variable domain of immunoglobulin light chains that participates in the antigen recognition. Immunoglobulins, also known as antibodies, are membrane-bound or secreted glycoproteins produced by B lymphocytes. In the recognition phase of humoral immunity, the membrane-bound immunoglobulins serve as receptors which, upon binding of a specific antigen, trigger the clonal expansion and differentiation of B lymphocytes into immunoglobulins-secreting plasma cells. Secreted immunoglobulins mediate the effector phase of humoral immunity, which results in the elimination of bound antigens. The antigen binding site is formed by the variable domain of one heavy chain, together with that of its associated light chain. Thus, each immunoglobulin has two antigen binding sites with remarkable affinity for a particular antigen. The variable domains are assembled by a process called V-(D)-J rearrangement and can then be subjected to somatic hypermutations which, after exposure to antigen and selection, allow affinity maturation for a particular antigen. The chain is Immunoglobulin kappa variable 1-33 from Homo sapiens (Human).